Reading from the N-terminus, the 431-residue chain is COBRA-like protein 4 (431 aa).

Positions 1-20 (MRLLFSFCFFFFMIIFTATA) are cleaved as a signal peptide. 8 N-linked (GlcNAc...) asparagine glycosylation sites follow: Asn29, Asn154, Asn162, Asn201, Asn226, Asn306, Asn321, and Asn340. Asn414 is lipidated: GPI-anchor amidated asparagine. Positions 415–431 (FASFSLTILLLLFISIW) are cleaved as a propeptide — removed in mature form.

Belongs to the COBRA family. In terms of tissue distribution, expressed in roots, stems, leaves, flowers and siliques.

The protein resides in the cell membrane. The protein is COBRA-like protein 4 (COBL4) of Arabidopsis thaliana (Mouse-ear cress).